The primary structure comprises 76 residues: CLAVATA3/ESR (CLE)-related protein 46 (76 aa).

A signal peptide spans 1–26 (MRRHDIIIKLLLLMCLLLSRFVTREC). Positions 53-76 (EEKKWHKHPSGPNPTGNRHPPVKH) are disordered. Hydroxyproline occurs at positions 61 and 64. Pro-64 carries an O-linked (Ara...) hydroxyproline glycan.

It belongs to the CLV3/ESR signal peptide family. In terms of processing, the O-glycosylation (arabinosylation) of the hydroxyproline Pro-64 enhances binding affinity of the CLE46p peptide for its receptor.

The protein resides in the secreted. It localises to the extracellular space. In terms of biological role, extracellular signal peptide that regulates cell fate. The protein is CLAVATA3/ESR (CLE)-related protein 46 of Arabidopsis thaliana (Mouse-ear cress).